An 80-amino-acid polypeptide reads, in one-letter code: Protein KorB (80 aa).

DNA-binding regions (H-T-H motif) lie at residues A13 to D32 and N56 to E75.

Functionally, repressor for the transcription of certain pIJ101 promoters, including those the from kilA and kilB loci. This chain is Protein KorB (korB), found in Streptomyces lividans.